The following is a 448-amino-acid chain: Tubulin alpha chain (448 aa).

Residues glutamine 12, glutamate 73, serine 142, glycine 146, threonine 147, threonine 181, asparagine 208, and asparagine 230 each coordinate GTP. Glutamate 73 contributes to the Mg(2+) binding site. The active site involves glutamate 256.

Belongs to the tubulin family. Dimer of alpha and beta chains. A typical microtubule is a hollow water-filled tube with an outer diameter of 25 nm and an inner diameter of 15 nM. Alpha-beta heterodimers associate head-to-tail to form protofilaments running lengthwise along the microtubule wall with the beta-tubulin subunit facing the microtubule plus end conferring a structural polarity. Microtubules usually have 13 protofilaments but different protofilament numbers can be found in some organisms and specialized cells. Mg(2+) serves as cofactor.

It is found in the cytoplasm. It localises to the cytoskeleton. It catalyses the reaction GTP + H2O = GDP + phosphate + H(+). Tubulin is the major constituent of microtubules, a cylinder consisting of laterally associated linear protofilaments composed of alpha- and beta-tubulin heterodimers. Microtubules grow by the addition of GTP-tubulin dimers to the microtubule end, where a stabilizing cap forms. Below the cap, tubulin dimers are in GDP-bound state, owing to GTPase activity of alpha-tubulin. This chain is Tubulin alpha chain (TUB1), found in Eremothecium gossypii (strain ATCC 10895 / CBS 109.51 / FGSC 9923 / NRRL Y-1056) (Yeast).